A 402-amino-acid polypeptide reads, in one-letter code: uncharacterized protein (402 aa).

12 helical membrane passes run 11-31 (LALAFLLGMLAILGPLNIDMY), 48-68 (LVQLSLTACLVGLTIGQLIVG), 80-100 (LLICIFLFALSSLFCALSPNI), 108-125 (FLQGFTASAGLVLSRAIV), 140-160 (LLMVITAVAPMVAPMTGGAIL), 167-187 (WHTIFHVLMIIGFLLVLLIAL), 219-239 (FMGYALTVGFIHGGSFAYVSG), 254-274 (VFSILFGINGLAIISGSFIIG), 286-306 (LRIAVITAMIATAVLLTMTMI), 308-328 (GPLATLVISIFIYMITIGMVL), 347-367 (SALLGMLPLLLGSIVSPLVGI), and 373-393 (VPMGAIMFVTAVIGSLAFFGL).

It belongs to the major facilitator superfamily. Bcr/CmlA family.

The protein resides in the cell membrane. This is an uncharacterized protein from Bacillus subtilis (strain 168).